Consider the following 445-residue polypeptide: Tubulin beta-4B chain (445 aa).

Positions 1-4 (MREI) match the MREI motif motif. Residue Gln-11 coordinates GTP. Phosphothreonine is present on Thr-55. Lys-58 is subject to N6-acetyllysine. Residues Glu-69, Ser-138, Gly-142, Thr-143, and Gly-144 each contribute to the GTP site. Glu-69 contributes to the Mg(2+) binding site. Ser-172 carries the post-translational modification Phosphoserine; by CDK1. The GTP site is built by Asn-204 and Asn-226. The segment at 426 to 445 (QDATAEEEGEFEEEAEEEVA) is disordered. Acidic residues predominate over residues 429–445 (TAEEEGEFEEEAEEEVA). Glu-438 carries the post-translational modification 5-glutamyl polyglutamate.

Belongs to the tubulin family. As to quaternary structure, dimer of alpha and beta chains. A typical microtubule is a hollow water-filled tube with an outer diameter of 25 nm and an inner diameter of 15 nM. Alpha-beta heterodimers associate head-to-tail to form protofilaments running lengthwise along the microtubule wall with the beta-tubulin subunit facing the microtubule plus end conferring a structural polarity. Microtubules usually have 13 protofilaments but different protofilament numbers can be found in some organisms and specialized cells. Component of sperm flagellar doublet microtubules. It depends on Mg(2+) as a cofactor. In terms of processing, some glutamate residues at the C-terminus are polyglycylated, resulting in polyglycine chains on the gamma-carboxyl group. Glycylation is mainly limited to tubulin incorporated into axonemes (cilia and flagella) whereas glutamylation is prevalent in neuronal cells, centrioles, axonemes, and the mitotic spindle. Both modifications can coexist on the same protein on adjacent residues, and lowering polyglycylation levels increases polyglutamylation, and reciprocally. Cilia and flagella glycylation is required for their stability and maintenance. Flagella glycylation controls sperm motility. Post-translationally, some glutamate residues at the C-terminus are polyglutamylated, resulting in polyglutamate chains on the gamma-carboxyl group. Polyglutamylation plays a key role in microtubule severing by spastin (SPAST). SPAST preferentially recognizes and acts on microtubules decorated with short polyglutamate tails: severing activity by SPAST increases as the number of glutamates per tubulin rises from one to eight, but decreases beyond this glutamylation threshold. Glutamylation is also involved in cilia motility. Phosphorylated on Ser-172 by CDK1 during the cell cycle, from metaphase to telophase, but not in interphase. This phosphorylation inhibits tubulin incorporation into microtubules.

The protein resides in the cytoplasm. Its subcellular location is the cytoskeleton. The protein localises to the flagellum axoneme. Its function is as follows. Tubulin is the major constituent of microtubules, a cylinder consisting of laterally associated linear protofilaments composed of alpha- and beta-tubulin heterodimers. Microtubules grow by the addition of GTP-tubulin dimers to the microtubule end, where a stabilizing cap forms. Below the cap, tubulin dimers are in GDP-bound state, owing to GTPase activity of alpha-tubulin. The chain is Tubulin beta-4B chain (TUBB4B) from Bos taurus (Bovine).